Consider the following 127-residue polypeptide: uncharacterized protein (127 aa).

3 helical membrane-spanning segments follow: residues 20–42 (NMIWLYEVYMLYKTYTSYFFMSS), 54–76 (IYFCYCANFIALFRVIFGTIFVY), and 91–110 (WILIYLKGSINSLLYMASFT).

Its subcellular location is the membrane. The protein resides in the cytoplasm. This is an uncharacterized protein from Schizosaccharomyces pombe (strain 972 / ATCC 24843) (Fission yeast).